Here is a 498-residue protein sequence, read N- to C-terminus: Cytoskeletal signaling protein slm1 (498 aa).

A disordered region spans residues Met1–Asp23. Residues Ser175 and Ser312 each carry the phosphoserine modification. In terms of domain architecture, PH spans Val300–Ala405. A disordered region spans residues Ala416 to Gln475. Residues Arg441 to Gln475 show a composition bias toward polar residues.

The protein resides in the cell tip. Its function is as follows. Effector of the TORC2- and calcineurin-signaling pathways. Mediates actin polarization via inhibition of calcineurin-dependent transcription. May play a role in the response to the disruption of sphingolipid synthesis, where dephosphorylation of slm1 leads to the activation and phosphorylation of ypk1 through the TORC2 and PKH1 pathways, which in turn phosphorylates orm1 and lag1 to activate sphingolipid synthesis. The sequence is that of Cytoskeletal signaling protein slm1 (slm1) from Schizosaccharomyces pombe (strain 972 / ATCC 24843) (Fission yeast).